The sequence spans 215 residues: Outer-membrane lipoprotein LolB (215 aa).

The signal sequence occupies residues 1 to 19 (MSKLRKITSLIFLTIIMVG). Cys20 carries the N-palmitoyl cysteine lipid modification. Residue Cys20 is the site of S-diacylglycerol cysteine attachment.

It belongs to the LolB family. As to quaternary structure, monomer.

The protein resides in the cell outer membrane. Its function is as follows. Plays a critical role in the incorporation of lipoproteins in the outer membrane after they are released by the LolA protein. This chain is Outer-membrane lipoprotein LolB, found in Vibrio atlanticus (strain LGP32) (Vibrio splendidus (strain Mel32)).